Here is a 567-residue protein sequence, read N- to C-terminus: Geranylgeranyl transferase type-2 subunit alpha (567 aa).

6 PFTA repeats span residues 44-78, 88-122, 124-158, 159-193, 207-241, and 363-397; these read LDESVLELTSQILGANPDFATLWNCRREVLQQLEV, LVKAELGFLESCLRVNPKSYGTWHHRCWLLSRLPE, NWARELELCARFLEVDERNFHCWDYRRFVAAQAAV, PPAEELAFTDSLITRNFSNYSSWHYRSCLLPQLHP, VLLKELELVQNAFFTDPNDQSAWFYHRWLLGRADP, and VLQSELESCKELQELEPENKWCLLTIILLMRALDP. Serine 98 bears the Phosphoserine mark. LRR repeat units lie at residues 442-463, 464-486, 487-508, 509-530, and 534-555; these read EVRVLHLGHKDLTVLCHLEQLL, LVTHLDLSHNRLRALPPALAALR, CLEVLQANDNAIESLDGVTNLP, RLQELILCNNRLQQPAVLQPLT, and RLTLLNLQGNPLCQAEGSSEHL.

The protein belongs to the protein prenyltransferase subunit alpha family. In terms of assembly, heterotrimer composed of RABGGTA, RABGGTB and CHM; within this trimer, RABGGTA and RABGGTB form the catalytic component B, while CHM (component A) mediates peptide substrate binding. The Rab GGTase dimer (RGGT) interacts with CHM (component A) prior to Rab protein binding; the association is stabilized by geranylgeranyl pyrophosphate (GGpp). The CHM:RGGT:Rab complex is destabilized by GGpp. Interacts with non-phosphorylated form of RAB8A; phosphorylation of RAB8A at 'Thr-72' disrupts this interaction.

The catalysed reaction is geranylgeranyl diphosphate + L-cysteinyl-[protein] = S-geranylgeranyl-L-cysteinyl-[protein] + diphosphate. With respect to regulation, the enzymatic reaction requires the aid of a Rab escort protein (also called component A), such as CHM. In terms of biological role, catalyzes the transfer of a geranylgeranyl moiety from geranylgeranyl diphosphate to both cysteines of Rab proteins with the C-terminal sequence -XXCC, -XCXC and -CCXX, such as RAB1A, RAB3A, RAB5A and RAB7A. This Bos taurus (Bovine) protein is Geranylgeranyl transferase type-2 subunit alpha (RABGGTA).